We begin with the raw amino-acid sequence, 339 residues long: Probable geranylgeranyl transferase type-2 subunit beta (339 aa).

PFTB repeat units follow at residues 24-65, 72-113, 120-161, 168-209, 216-257, and 264-306; these read IDKH…YLLK, KNEV…IQYD, INSV…SLLK, CEKA…SILN, IDKL…SAID, and NDKL…SLMG. Residues 194–196 and 236–248 each bind geranylgeranyl diphosphate; these read HAG and RPEK…YSWW. 3 residues coordinate Zn(2+): D242, C244, and H294.

It belongs to the protein prenyltransferase subunit beta family. As to quaternary structure, heterodimer of an alpha and a beta subunit. Requires Zn(2+) as cofactor.

The catalysed reaction is geranylgeranyl diphosphate + L-cysteinyl-[protein] = S-geranylgeranyl-L-cysteinyl-[protein] + diphosphate. Catalyzes the transfer of a geranyl-geranyl moiety from geranyl-geranyl pyrophosphate to both cysteines in Rab proteins with an -XXCC, -XCXC and -CCXX C-terminal. The polypeptide is Probable geranylgeranyl transferase type-2 subunit beta (rabggtb) (Dictyostelium discoideum (Social amoeba)).